The chain runs to 193 residues: dCTP deaminase (193 aa).

DCTP-binding positions include 110–115, Asp-128, 136–138, Tyr-171, Lys-178, and Gln-182; these read RSSLAR and VLE. Glu-138 (proton donor/acceptor) is an active-site residue.

This sequence belongs to the dCTP deaminase family. In terms of assembly, homotrimer.

It carries out the reaction dCTP + H2O + H(+) = dUTP + NH4(+). It functions in the pathway pyrimidine metabolism; dUMP biosynthesis; dUMP from dCTP (dUTP route): step 1/2. Functionally, catalyzes the deamination of dCTP to dUTP. In Buchnera aphidicola subsp. Baizongia pistaciae (strain Bp), this protein is dCTP deaminase.